Consider the following 222-residue polypeptide: Ribonuclease 3 (222 aa).

The 123-residue stretch at 5-127 (PIKLEKKLKL…LIGAIYLDKG (123 aa)) folds into the RNase III domain. Mg(2+) is bound at residue Glu41. The active site involves Asp45. Mg(2+) contacts are provided by Asp113 and Glu116. Glu116 is a catalytic residue. Residues 152-221 (DAKTKLQEYS…ASLCLQDIFK (70 aa)) form the DRBM domain.

The protein belongs to the ribonuclease III family. Homodimer. Mg(2+) is required as a cofactor.

Its subcellular location is the cytoplasm. The catalysed reaction is Endonucleolytic cleavage to 5'-phosphomonoester.. Functionally, digests double-stranded RNA. Involved in the processing of primary rRNA transcript to yield the immediate precursors to the large and small rRNAs (23S and 16S). Processes some mRNAs, and tRNAs when they are encoded in the rRNA operon. Processes pre-crRNA and tracrRNA of type II CRISPR loci if present in the organism. The chain is Ribonuclease 3 from Pelagibacter ubique (strain HTCC1062).